Consider the following 302-residue polypeptide: Succinate--CoA ligase [ADP-forming] subunit alpha (302 aa).

CoA contacts are provided by residues 17–20, lysine 43, and 96–98; these read TGST and ITE. A substrate-binding site is contributed by tyrosine 159. Histidine 247 acts as the Tele-phosphohistidine intermediate in catalysis.

The protein belongs to the succinate/malate CoA ligase alpha subunit family. As to quaternary structure, heterotetramer of two alpha and two beta subunits.

It catalyses the reaction succinate + ATP + CoA = succinyl-CoA + ADP + phosphate. The enzyme catalyses GTP + succinate + CoA = succinyl-CoA + GDP + phosphate. Its pathway is carbohydrate metabolism; tricarboxylic acid cycle; succinate from succinyl-CoA (ligase route): step 1/1. Succinyl-CoA synthetase functions in the citric acid cycle (TCA), coupling the hydrolysis of succinyl-CoA to the synthesis of either ATP or GTP and thus represents the only step of substrate-level phosphorylation in the TCA. The alpha subunit of the enzyme binds the substrates coenzyme A and phosphate, while succinate binding and nucleotide specificity is provided by the beta subunit. In Staphylococcus epidermidis (strain ATCC 12228 / FDA PCI 1200), this protein is Succinate--CoA ligase [ADP-forming] subunit alpha.